A 1563-amino-acid chain; its full sequence is NACHT domain- and WD repeat-containing protein 1 (1563 aa).

The WD 1 repeat unit spans residues 274–314 (TNHQVLEQLRELELARQELGWLYQEIRHHLWQSTESTKVFC). An NACHT domain is found at 336–666 (TPLVLFGPPG…HRQLSQVIQV (331 aa)). 342–349 (GPPGIGKT) lines the ATP pocket. WD repeat units lie at residues 866-905 (GCHK…VVHV), 908-947 (GHTA…EKVT), 954-994 (QNPT…LVFC), 998-1037 (DVSD…LQEK), 1044-1082 (KEET…LLEK), 1126-1165 (EHED…TLLN), 1168-1207 (EGVG…KLQS), 1212-1251 (LDRT…EQDC), 1253-1292 (DTSN…DVLC), 1346-1385 (QLPE…FPLE), 1386-1425 (AHGS…GMFE), and 1431-1470 (SCCR…LLAV). The segment at 1534-1563 (AAEASQDAEPVAVEGKESKSNKRSQVCLIL) is disordered.

As to quaternary structure, may interact with HSP90AA1, HSP90AB1 and BAG2.

Its subcellular location is the cytoplasm. It is found in the cytosol. Functionally, may play a role in the control of androgen receptor (AR) protein steady-state levels. This chain is NACHT domain- and WD repeat-containing protein 1 (Nwd1), found in Mus musculus (Mouse).